Consider the following 243-residue polypeptide: Peptidyl-tRNA hydrolase (243 aa).

Y14 contributes to the tRNA binding site. H19 functions as the Proton acceptor in the catalytic mechanism. TRNA contacts are provided by Y64, N66, and N112. Residues 190–207 (KAEEEKPRKEGKDGEKKP) show a composition bias toward basic and acidic residues. Residues 190–243 (KAEEEKPRKEGKDGEKKPAGQSHIRQARSSNQPKLPATGPMAEMLKKMFGNKGE) are disordered. Over residues 212–222 (HIRQARSSNQP) the composition is skewed to polar residues.

The protein belongs to the PTH family. In terms of assembly, monomer.

It localises to the cytoplasm. The catalysed reaction is an N-acyl-L-alpha-aminoacyl-tRNA + H2O = an N-acyl-L-amino acid + a tRNA + H(+). Functionally, hydrolyzes ribosome-free peptidyl-tRNAs (with 1 or more amino acids incorporated), which drop off the ribosome during protein synthesis, or as a result of ribosome stalling. Catalyzes the release of premature peptidyl moieties from peptidyl-tRNA molecules trapped in stalled 50S ribosomal subunits, and thus maintains levels of free tRNAs and 50S ribosomes. The chain is Peptidyl-tRNA hydrolase from Rhizobium etli (strain CIAT 652).